Consider the following 165-residue polypeptide: Phosphopantetheine adenylyltransferase (165 aa).

Belongs to the eukaryotic CoaD family.

The protein resides in the cytoplasm. It carries out the reaction (R)-4'-phosphopantetheine + ATP + H(+) = 3'-dephospho-CoA + diphosphate. It participates in cofactor biosynthesis; coenzyme A biosynthesis. In terms of biological role, reversibly transfers an adenylyl group from ATP to 4'-phosphopantetheine, yielding dephospho-CoA (dPCoA) and pyrophosphate. This Thermococcus kodakarensis (strain ATCC BAA-918 / JCM 12380 / KOD1) (Pyrococcus kodakaraensis (strain KOD1)) protein is Phosphopantetheine adenylyltransferase.